Reading from the N-terminus, the 132-residue chain is Small ribosomal subunit protein uS8 (132 aa).

Belongs to the universal ribosomal protein uS8 family. Part of the 30S ribosomal subunit. Contacts proteins S5 and S12.

Its function is as follows. One of the primary rRNA binding proteins, it binds directly to 16S rRNA central domain where it helps coordinate assembly of the platform of the 30S subunit. This is Small ribosomal subunit protein uS8 from Paracoccus denitrificans (strain Pd 1222).